The primary structure comprises 1028 residues: Beta-galactosidase (1028 aa).

N104 and D203 together coordinate substrate. Na(+) is bound at residue D203. Positions 418, 420, and 463 each coordinate Mg(2+). Substrate-binding positions include E463 and 539 to 542 (EYAH). Catalysis depends on E463, which acts as the Proton donor. E539 serves as the catalytic Nucleophile. Residue N599 participates in Mg(2+) binding. Residues F603 and N606 each contribute to the Na(+) site. Positions 606 and 1003 each coordinate substrate.

The protein belongs to the glycosyl hydrolase 2 family. As to quaternary structure, homotetramer. The cofactor is Mg(2+). Na(+) serves as cofactor.

It catalyses the reaction Hydrolysis of terminal non-reducing beta-D-galactose residues in beta-D-galactosides.. The protein is Beta-galactosidase of Enterobacter cloacae.